Consider the following 542-residue polypeptide: CTP synthase (542 aa).

The tract at residues 1 to 265 (MARYIFITGG…DDEVLAAFGL (265 aa)) is amidoligase domain. S13 contributes to the CTP binding site. A UTP-binding site is contributed by S13. 14-19 (SLGKGL) is an ATP binding site. Y54 contributes to the L-glutamine binding site. Residue D71 participates in ATP binding. D71 and E139 together coordinate Mg(2+). Residues 146 to 148 (DIE), 186 to 191 (KTKPTQ), and K222 contribute to the CTP site. Residues 186–191 (KTKPTQ) and K222 contribute to the UTP site. Residue 238–240 (RDA) coordinates ATP. The Glutamine amidotransferase type-1 domain occupies 290–541 (TIAIVGKYTG…IQAAVVQSRL (252 aa)). An L-glutamine-binding site is contributed by G352. The active-site Nucleophile; for glutamine hydrolysis is the C379. L-glutamine is bound by residues 380-383 (FGMQ), E403, and R469. Residues H514 and E516 contribute to the active site.

Belongs to the CTP synthase family. As to quaternary structure, homotetramer.

It catalyses the reaction UTP + L-glutamine + ATP + H2O = CTP + L-glutamate + ADP + phosphate + 2 H(+). It carries out the reaction L-glutamine + H2O = L-glutamate + NH4(+). The enzyme catalyses UTP + NH4(+) + ATP = CTP + ADP + phosphate + 2 H(+). The protein operates within pyrimidine metabolism; CTP biosynthesis via de novo pathway; CTP from UDP: step 2/2. With respect to regulation, allosterically activated by GTP, when glutamine is the substrate; GTP has no effect on the reaction when ammonia is the substrate. The allosteric effector GTP functions by stabilizing the protein conformation that binds the tetrahedral intermediate(s) formed during glutamine hydrolysis. Inhibited by the product CTP, via allosteric rather than competitive inhibition. Functionally, catalyzes the ATP-dependent amination of UTP to CTP with either L-glutamine or ammonia as the source of nitrogen. Regulates intracellular CTP levels through interactions with the four ribonucleotide triphosphates. The chain is CTP synthase from Nitrobacter hamburgensis (strain DSM 10229 / NCIMB 13809 / X14).